We begin with the raw amino-acid sequence, 120 residues long: Ribonuclease P protein component (120 aa).

It belongs to the RnpA family. As to quaternary structure, consists of a catalytic RNA component (M1 or rnpB) and a protein subunit.

The enzyme catalyses Endonucleolytic cleavage of RNA, removing 5'-extranucleotides from tRNA precursor.. In terms of biological role, RNaseP catalyzes the removal of the 5'-leader sequence from pre-tRNA to produce the mature 5'-terminus. It can also cleave other RNA substrates such as 4.5S RNA. The protein component plays an auxiliary but essential role in vivo by binding to the 5'-leader sequence and broadening the substrate specificity of the ribozyme. This is Ribonuclease P protein component from Dehalococcoides mccartyi (strain ATCC BAA-2266 / KCTC 15142 / 195) (Dehalococcoides ethenogenes (strain 195)).